Consider the following 167-residue polypeptide: Urease accessory protein UreE (167 aa).

This sequence belongs to the UreE family.

Its subcellular location is the cytoplasm. In terms of biological role, involved in urease metallocenter assembly. Binds nickel. Probably functions as a nickel donor during metallocenter assembly. This chain is Urease accessory protein UreE, found in Pseudomonas paraeruginosa (strain DSM 24068 / PA7) (Pseudomonas aeruginosa (strain PA7)).